The following is a 162-amino-acid chain: Ribosome maturation factor RimP (162 aa).

It belongs to the RimP family.

The protein resides in the cytoplasm. Its function is as follows. Required for maturation of 30S ribosomal subunits. This chain is Ribosome maturation factor RimP, found in Cupriavidus metallidurans (strain ATCC 43123 / DSM 2839 / NBRC 102507 / CH34) (Ralstonia metallidurans).